A 156-amino-acid polypeptide reads, in one-letter code: Small ribosomal subunit protein uS7 (156 aa).

The protein belongs to the universal ribosomal protein uS7 family. As to quaternary structure, part of the 30S ribosomal subunit. Contacts proteins S9 and S11.

One of the primary rRNA binding proteins, it binds directly to 16S rRNA where it nucleates assembly of the head domain of the 30S subunit. Is located at the subunit interface close to the decoding center, probably blocks exit of the E-site tRNA. This Shouchella clausii (strain KSM-K16) (Alkalihalobacillus clausii) protein is Small ribosomal subunit protein uS7.